We begin with the raw amino-acid sequence, 220 residues long: Deoxyribose-phosphate aldolase 2 (220 aa).

Catalysis depends on Asp-89, which acts as the Proton donor/acceptor. The active-site Schiff-base intermediate with acetaldehyde is the Lys-151. The Proton donor/acceptor role is filled by Lys-180.

It belongs to the DeoC/FbaB aldolase family. DeoC type 1 subfamily.

It localises to the cytoplasm. It catalyses the reaction 2-deoxy-D-ribose 5-phosphate = D-glyceraldehyde 3-phosphate + acetaldehyde. It functions in the pathway carbohydrate degradation; 2-deoxy-D-ribose 1-phosphate degradation; D-glyceraldehyde 3-phosphate and acetaldehyde from 2-deoxy-alpha-D-ribose 1-phosphate: step 2/2. Functionally, catalyzes a reversible aldol reaction between acetaldehyde and D-glyceraldehyde 3-phosphate to generate 2-deoxy-D-ribose 5-phosphate. The sequence is that of Deoxyribose-phosphate aldolase 2 from Staphylococcus aureus (strain MRSA252).